Here is a 160-residue protein sequence, read N- to C-terminus: V-type proton ATPase subunit c (160 aa).

Over 1–8 (MTELCPVY) the chain is Vacuolar. The chain crosses the membrane as a helical span at residues 9–31 (APFFGAIGCASAIIFTSLGAAYG). The Cytoplasmic segment spans residues 32 to 53 (TAKSGVGICATCVLRPDLLFKN). The helical transmembrane segment at 54-74 (IVPVIMAGIIAIYGLVVSVLV) threads the bilayer. At 75-90 (CYSLGQKQALYTGFIQ) the chain is on the vacuolar side. Residues 91 to 112 (LGAGLSVGLSGLAAGFAIGIVG) form a helical membrane-spanning segment. Topologically, residues 113-124 (DAGVRGSSQQPR) are cytoplasmic. The chain crosses the membrane as a helical span at residues 125-150 (LFVGMILILIFAEVLGLYGLIVALLL). Residues 151–160 (NSRATQDVVC) lie on the Vacuolar side of the membrane.

It belongs to the V-ATPase proteolipid subunit family. V-ATPase is a heteromultimeric enzyme composed of a peripheral catalytic V1 complex (components A to H) attached to an integral membrane V0 proton pore complex (components: a, c, c', c'', d, e, f and VOA1). The decameric c-ring forms the proton-conducting pore, and is composed of eight proteolipid subunits c, one subunit c' and one subunit c''.

It is found in the vacuole membrane. Functionally, proton-conducting pore forming subunit of the V0 complex of vacuolar(H+)-ATPase (V-ATPase), a multisubunit enzyme composed of a peripheral complex (V1) that hydrolyzes ATP and a membrane integral complex (V0) that translocates protons. V-ATPase is responsible for acidifying and maintaining the pH of intracellular compartments. The protein is V-type proton ATPase subunit c (VMA3) of Saccharomyces cerevisiae (strain ATCC 204508 / S288c) (Baker's yeast).